A 298-amino-acid chain; its full sequence is Glutamyl-Q tRNA(Asp) synthetase (298 aa).

L-glutamate-binding positions include 8–12 (RFAPS) and glutamate 44. The 'HIGH' region signature appears at 11 to 21 (PSPTGPLHFGS). Residues cysteine 100, cysteine 102, tyrosine 123, and cysteine 127 each contribute to the Zn(2+) site. L-glutamate is bound by residues tyrosine 183 and arginine 201. The 'KMSKS' region signature appears at 239 to 243 (KLSKQ). Lysine 242 provides a ligand contact to ATP.

This sequence belongs to the class-I aminoacyl-tRNA synthetase family. GluQ subfamily. Zn(2+) serves as cofactor.

Functionally, catalyzes the tRNA-independent activation of glutamate in presence of ATP and the subsequent transfer of glutamate onto a tRNA(Asp). Glutamate is transferred on the 2-amino-5-(4,5-dihydroxy-2-cyclopenten-1-yl) moiety of the queuosine in the wobble position of the QUC anticodon. The polypeptide is Glutamyl-Q tRNA(Asp) synthetase (Burkholderia cenocepacia (strain ATCC BAA-245 / DSM 16553 / LMG 16656 / NCTC 13227 / J2315 / CF5610) (Burkholderia cepacia (strain J2315))).